We begin with the raw amino-acid sequence, 545 residues long: Chaperonin GroEL (545 aa).

ATP contacts are provided by residues 29 to 32, K50, 86 to 90, G415, and D495; these read TLGP and DGTTT.

The protein belongs to the chaperonin (HSP60) family. As to quaternary structure, forms a cylinder of 14 subunits composed of two heptameric rings stacked back-to-back. Interacts with the co-chaperonin GroES.

It localises to the cytoplasm. It carries out the reaction ATP + H2O + a folded polypeptide = ADP + phosphate + an unfolded polypeptide.. Its function is as follows. Together with its co-chaperonin GroES, plays an essential role in assisting protein folding. The GroEL-GroES system forms a nano-cage that allows encapsulation of the non-native substrate proteins and provides a physical environment optimized to promote and accelerate protein folding. The sequence is that of Chaperonin GroEL from Porphyromonas gingivalis (strain ATCC 33277 / DSM 20709 / CIP 103683 / JCM 12257 / NCTC 11834 / 2561).